A 494-amino-acid chain; its full sequence is Catalase (494 aa).

Active-site residues include His-65 and Asn-138. Residue Tyr-348 participates in heme binding.

This sequence belongs to the catalase family. In terms of assembly, homotetramer. Heme is required as a cofactor.

The protein resides in the cytoplasm. It is found in the cytosol. Its subcellular location is the peroxisome matrix. The catalysed reaction is 2 H2O2 = O2 + 2 H2O. In terms of biological role, catalyzes the degradation of hydrogen peroxide (H(2)O(2)) generated by peroxisomal oxidases to water and oxygen, thereby protecting cells from the toxic effects of hydrogen peroxide. The protein is Catalase of Pisum sativum (Garden pea).